A 227-amino-acid polypeptide reads, in one-letter code: Cytochrome c oxidase subunit 2 (227 aa).

The Mitochondrial intermembrane segment spans residues 1-14; that stretch reads MAYPLQLGLQDATS. A helical transmembrane segment spans residues 15 to 45; sequence PIMEELMNFHDHTLMIVFLISSLVLYIISLM. Residues 46 to 59 are Mitochondrial matrix-facing; the sequence is LTTKLTHTSTMDAQ. Residues 60–87 traverse the membrane as a helical segment; it reads EVETIWTILPAVILIMIALPSLRILYMM. The Mitochondrial intermembrane segment spans residues 88–227; sequence DEINNPVLTV…HFENWSASMI (140 aa). 6 residues coordinate Cu cation: His161, Cys196, Glu198, Cys200, His204, and Met207. Glu198 lines the Mg(2+) pocket.

This sequence belongs to the cytochrome c oxidase subunit 2 family. In terms of assembly, component of the cytochrome c oxidase (complex IV, CIV), a multisubunit enzyme composed of 14 subunits. The complex is composed of a catalytic core of 3 subunits MT-CO1, MT-CO2 and MT-CO3, encoded in the mitochondrial DNA, and 11 supernumerary subunits COX4I, COX5A, COX5B, COX6A, COX6B, COX6C, COX7A, COX7B, COX7C, COX8 and NDUFA4, which are encoded in the nuclear genome. The complex exists as a monomer or a dimer and forms supercomplexes (SCs) in the inner mitochondrial membrane with NADH-ubiquinone oxidoreductase (complex I, CI) and ubiquinol-cytochrome c oxidoreductase (cytochrome b-c1 complex, complex III, CIII), resulting in different assemblies (supercomplex SCI(1)III(2)IV(1) and megacomplex MCI(2)III(2)IV(2)). Found in a complex with TMEM177, COA6, COX18, COX20, SCO1 and SCO2. Interacts with TMEM177 in a COX20-dependent manner. Interacts with COX20. Interacts with COX16. Cu cation is required as a cofactor.

The protein resides in the mitochondrion inner membrane. The catalysed reaction is 4 Fe(II)-[cytochrome c] + O2 + 8 H(+)(in) = 4 Fe(III)-[cytochrome c] + 2 H2O + 4 H(+)(out). Functionally, component of the cytochrome c oxidase, the last enzyme in the mitochondrial electron transport chain which drives oxidative phosphorylation. The respiratory chain contains 3 multisubunit complexes succinate dehydrogenase (complex II, CII), ubiquinol-cytochrome c oxidoreductase (cytochrome b-c1 complex, complex III, CIII) and cytochrome c oxidase (complex IV, CIV), that cooperate to transfer electrons derived from NADH and succinate to molecular oxygen, creating an electrochemical gradient over the inner membrane that drives transmembrane transport and the ATP synthase. Cytochrome c oxidase is the component of the respiratory chain that catalyzes the reduction of oxygen to water. Electrons originating from reduced cytochrome c in the intermembrane space (IMS) are transferred via the dinuclear copper A center (CU(A)) of subunit 2 and heme A of subunit 1 to the active site in subunit 1, a binuclear center (BNC) formed by heme A3 and copper B (CU(B)). The BNC reduces molecular oxygen to 2 water molecules using 4 electrons from cytochrome c in the IMS and 4 protons from the mitochondrial matrix. The sequence is that of Cytochrome c oxidase subunit 2 (MT-CO2) from Zelotomys hildegardeae (Hildegarde's broad-headed mouse).